The primary structure comprises 494 residues: Solute carrier family 2, facilitated glucose transporter member 3 (494 aa).

Topologically, residues 1–10 (MGTTKVTAPL) are cytoplasmic. A helical membrane pass occupies residues 11–32 (IFAISVATIGSFQFGYNTGVIN). Over 33–64 (APEAIIKDFLNYTLEERSEPPPSSVLLTSLWS) the chain is Extracellular. N-linked (GlcNAc...) asparagine glycosylation occurs at asparagine 43. Residues 65–85 (LSVAIFSVGGMIGSFSVGLFV) traverse the membrane as a helical segment. The Cytoplasmic segment spans residues 86–90 (NRFGR). The helical transmembrane segment at 91–111 (GNSMLIVNLLAIAGGCLMGFC) threads the bilayer. The Extracellular portion of the chain corresponds to 112–118 (KIAESVE). Residues 119–142 (MLILGRLIIGLFCGLCTGFVPMYI) form a helical membrane-spanning segment. Over 143 to 153 (GEISPTALRGA) the chain is Cytoplasmic. Residues 154–174 (FGTLNQLGIVIGILVAQIFGL) form a helical membrane-spanning segment. Glutamine 159 contributes to the D-glucose binding site. Residues 175-183 (KVILGTEDL) are Extracellular-facing. The chain crosses the membrane as a helical span at residues 184 to 204 (WPLLLGFTILPAIIQCAALPF). Residues 205 to 269 (CPESPRFLLI…LFRAPNYRQP (65 aa)) are Cytoplasmic-facing. Position 232 is a phosphothreonine (threonine 232). A helical membrane pass occupies residues 270–290 (IIISIMLQLSQQLSGINAVFY). The tract at residues 277–279 (QLS) is important for selectivity against fructose. D-glucose is bound by residues 280–281 (QQ) and asparagine 286. Over 291 to 304 (YSTGIFKDAGVQEP) the chain is Extracellular. A helical membrane pass occupies residues 305–325 (VYATIGAGVVNTIFTVVSVFL). Asparagine 315 contacts D-glucose. The Cytoplasmic portion of the chain corresponds to 326-331 (VERAGR). A helical transmembrane segment spans residues 332 to 352 (RTLHLIGLGGMAFCSILMTIS). Over 353-363 (LLLKDNYSWMS) the chain is Extracellular. N-linked (GlcNAc...) asparagine glycosylation is present at asparagine 358. The chain crosses the membrane as a helical span at residues 364–389 (FICIGAILVFVAFFEIGPGPIPWFIV). The D-glucose site is built by glutamate 378 and tryptophan 386. Topologically, residues 390 to 399 (AELFGQGPRP) are cytoplasmic. A helical transmembrane segment spans residues 400–420 (AAMAVAGCSNWTSNFLVGLLF). The Extracellular segment spans residues 421–429 (PSAAFYLGA). The helical transmembrane segment at 430–450 (YVFIVFTVFLVIFWVFTFFKV) threads the bilayer. The Cytoplasmic portion of the chain corresponds to 451–494 (PETRGRTFEEITRAFEGQTQTGTRGEKGPIMEMNSIQPTKDTNA). A disordered region spans residues 469-494 (TQTGTRGEKGPIMEMNSIQPTKDTNA). Residues 484-494 (NSIQPTKDTNA) show a composition bias toward polar residues. Serine 485 bears the Phosphoserine mark. Threonine 492 carries the phosphothreonine modification.

It belongs to the major facilitator superfamily. Sugar transporter (TC 2.A.1.1) family. Glucose transporter subfamily. As to quaternary structure, interacts with SMIM43; the interaction may promote SLC2A1-mediated glucose transport to meet the energy needs of mesendoderm differentiation.

It localises to the cell membrane. The protein localises to the perikaryon. It is found in the cell projection. It carries out the reaction D-glucose(out) = D-glucose(in). The enzyme catalyses D-galactose(in) = D-galactose(out). Deoxyglucose transport is inhibited by D-glucose, D-galactose and maltose. Galactose transport is inhibited by D-glucose and maltose. Functionally, facilitative glucose transporter. Can also mediate the uptake of various other monosaccharides across the cell membrane. Mediates the uptake of glucose, 2-deoxyglucose, galactose, mannose, xylose and fucose, and probably also dehydroascorbate. Does not mediate fructose transport. Required for mesendoderm differentiation. The polypeptide is Solute carrier family 2, facilitated glucose transporter member 3 (Bos taurus (Bovine)).